The chain runs to 118 residues: Large ribosomal subunit protein bL20 (118 aa).

Belongs to the bacterial ribosomal protein bL20 family.

Functionally, binds directly to 23S ribosomal RNA and is necessary for the in vitro assembly process of the 50S ribosomal subunit. It is not involved in the protein synthesizing functions of that subunit. The sequence is that of Large ribosomal subunit protein bL20 from Macrococcus caseolyticus (strain JCSC5402) (Macrococcoides caseolyticum).